We begin with the raw amino-acid sequence, 209 residues long: Uracil phosphoribosyltransferase (209 aa).

Residues Arg79, Arg104, and 131–139 (DPMLATGGS) contribute to the 5-phospho-alpha-D-ribose 1-diphosphate site. Residues Ile194 and 199–201 (GDA) each bind uracil. 5-phospho-alpha-D-ribose 1-diphosphate is bound at residue Asp200.

Belongs to the UPRTase family. Mg(2+) is required as a cofactor.

The catalysed reaction is UMP + diphosphate = 5-phospho-alpha-D-ribose 1-diphosphate + uracil. The protein operates within pyrimidine metabolism; UMP biosynthesis via salvage pathway; UMP from uracil: step 1/1. Allosterically activated by GTP. Functionally, catalyzes the conversion of uracil and 5-phospho-alpha-D-ribose 1-diphosphate (PRPP) to UMP and diphosphate. The polypeptide is Uracil phosphoribosyltransferase (Halalkalibacterium halodurans (strain ATCC BAA-125 / DSM 18197 / FERM 7344 / JCM 9153 / C-125) (Bacillus halodurans)).